A 340-amino-acid polypeptide reads, in one-letter code: uncharacterized protein (340 aa).

Residues A58–R307 form the Radical SAM core domain. C72, C76, and C79 together coordinate [4Fe-4S] cluster. The next 2 helical transmembrane spans lie at Y140–L160 and Q243–L263.

The cofactor is [4Fe-4S] cluster.

The protein localises to the cell membrane. This is an uncharacterized protein from Mycobacterium tuberculosis (strain CDC 1551 / Oshkosh).